Consider the following 281-residue polypeptide: MAVKLLKGEEIAEKKAEELKERIEKMGVSPRLVLLQVGNYSAATIYARAKIKRGKKIGADVVLEKYEDLTKQELVRRIEELSADKDVNGIMVENPLPKTIDYYDIVKSIPYYKDVDALSPYNQGSIAINREFLVPATAMAVVDILKYYGYEKTTATIINRSPVVGRPLSMMMLNRDYTVSICHSKTPDIRSIAKASKIIVVAVGRPGFLDDTYVTESSVVIDVGINYVQDKVIGDIDFDKVSEKVEAVTPVPGGVGPITATNILSNLVKAAEYQSNTNIGR.

NADP(+)-binding positions include 159-161 (NRS), S184, and I225.

Belongs to the tetrahydrofolate dehydrogenase/cyclohydrolase family. As to quaternary structure, homodimer.

It catalyses the reaction (6R)-5,10-methylene-5,6,7,8-tetrahydrofolate + NADP(+) = (6R)-5,10-methenyltetrahydrofolate + NADPH. The catalysed reaction is (6R)-5,10-methenyltetrahydrofolate + H2O = (6R)-10-formyltetrahydrofolate + H(+). Its pathway is one-carbon metabolism; tetrahydrofolate interconversion. Functionally, catalyzes the oxidation of 5,10-methylenetetrahydrofolate to 5,10-methenyltetrahydrofolate and then the hydrolysis of 5,10-methenyltetrahydrofolate to 10-formyltetrahydrofolate. The sequence is that of Bifunctional protein FolD from Thermoplasma volcanium (strain ATCC 51530 / DSM 4299 / JCM 9571 / NBRC 15438 / GSS1).